We begin with the raw amino-acid sequence, 397 residues long: Teichoic acid D-alanine hydrolase (397 aa).

Residues 1-27 form the signal peptide; that stretch reads MKFNKEKLVIHACVLLFIIISIGLVFH.

Its subcellular location is the cell membrane. The enzyme catalyses [(4-D-Ala)-(2-GlcNAc)-Rib-ol-P]n-[Gro-P]m-beta-D-ManNAc-(1-&gt;4)-alpha-D-GlcNAc-P-peptidoglycan + n H2O = [(2-GlcNAc)-Rib-ol-P]n-[Gro-P]m-beta-D-ManNAc-(1-&gt;4)-alpha-D-GlcNAc-P-peptidoglycan + n D-alanine.. Catalyzes the liberation of D-alanyl moieties present on wall teichoic acid (WTA) and lipoteichoic acid (LTA). Affects the methicillin resistance level and autolysis in the presence of Triton X-100 as well as the cell wall structure. In Staphylococcus aureus (strain MRSA252), this protein is Teichoic acid D-alanine hydrolase (fmtA).